We begin with the raw amino-acid sequence, 205 residues long: SREBP regulating gene protein (205 aa).

Residues 1–16 (MALYVSMVWRKILRKR) lie on the Cytoplasmic side of the membrane. Residues 17–35 (WVLGVVFGLSLIYFLTSTF) traverse the membrane as a helical segment. Residues 36–205 (KQEERTVRDR…GESPPELLPI (170 aa)) lie on the Lumenal side of the membrane. N67 is a glycosylation site (N-linked (GlcNAc...) asparagine).

This sequence belongs to the SPRING family.

The protein resides in the golgi apparatus membrane. Its function is as follows. Positively regulates hepatic SREBP signaling pathway by modulating the proper localization of SCAP (SREBP cleavage-activating protein) to the endoplasmic reticulum, thereby controlling the level of functional SCAP. This Xenopus laevis (African clawed frog) protein is SREBP regulating gene protein.